The primary structure comprises 954 residues: Glucosidase 2 subunit alpha (954 aa).

Positions 1–22 (MVLLKWLVCQLVFFTAFSHAFT) are cleaved as a signal peptide. Asn114, Asn126, Asn142, Asn173, and Asn345 each carry an N-linked (GlcNAc...) asparagine glycan. The active-site Nucleophile is the Asp537. Residue Glu540 is part of the active site. The active-site Proton donor is the Asp614. Residues Asn783, Asn791, Asn867, Asn880, Asn907, and Asn941 are each glycosylated (N-linked (GlcNAc...) asparagine).

This sequence belongs to the glycosyl hydrolase 31 family. As to quaternary structure, heterodimer of a catalytic subunit alpha (ROT2) and a subunit beta (GTB1).

It is found in the endoplasmic reticulum. The catalysed reaction is N(4)-(alpha-D-Glc-(1-&gt;3)-alpha-D-Man-(1-&gt;2)-alpha-D-Man-(1-&gt;2)-alpha-D-Man-(1-&gt;3)-[alpha-D-Man-(1-&gt;2)-alpha-D-Man-(1-&gt;3)-[alpha-D-Man-(1-&gt;2)-alpha-D-Man-(1-&gt;6)]-alpha-D-Man-(1-&gt;6)]-beta-D-Man-(1-&gt;4)-beta-D-GlcNAc-(1-&gt;4)-beta-D-GlcNAc)-L-asparaginyl-[protein] + H2O = N(4)-(alpha-D-Man-(1-&gt;2)-alpha-D-Man-(1-&gt;2)-alpha-D-Man-(1-&gt;3)-[alpha-D-Man-(1-&gt;2)-alpha-D-Man-(1-&gt;3)-[alpha-D-Man-(1-&gt;2)-alpha-D-Man-(1-&gt;6)]-alpha-D-Man-(1-&gt;6)]-beta-D-Man-(1-&gt;4)-beta-D-GlcNAc-(1-&gt;4)-beta-D-GlcNAc)-L-asparaginyl-[protein] (N-glucan mannose isomer 9A1,2,3B1,2,3) + beta-D-glucose. It carries out the reaction N(4)-(alpha-D-Glc-(1-&gt;3)-alpha-D-Glc-(1-&gt;3)-alpha-D-Man-(1-&gt;2)-alpha-D-Man-(1-&gt;2)-alpha-D-Man-(1-&gt;3)-[alpha-D-Man-(1-&gt;2)-alpha-D-Man-(1-&gt;3)-[alpha-D-Man-(1-&gt;2)-alpha-D-Man-(1-&gt;6)]-alpha-D-Man-(1-&gt;6)]-beta-D-Man-(1-&gt;4)-beta-D-GlcNAc-(1-&gt;4)-beta-D-GlcNAc)-L-asparaginyl-[protein] + H2O = N(4)-(alpha-D-Glc-(1-&gt;3)-alpha-D-Man-(1-&gt;2)-alpha-D-Man-(1-&gt;2)-alpha-D-Man-(1-&gt;3)-[alpha-D-Man-(1-&gt;2)-alpha-D-Man-(1-&gt;3)-[alpha-D-Man-(1-&gt;2)-alpha-D-Man-(1-&gt;6)]-alpha-D-Man-(1-&gt;6)]-beta-D-Man-(1-&gt;4)-beta-D-GlcNAc-(1-&gt;4)-beta-D-GlcNAc)-L-asparaginyl-[protein] + beta-D-glucose. The protein operates within glycan metabolism; N-glycan metabolism. Its activity is regulated as follows. Inhibited by glucose, maltose and nigerose, and by the antibiotic deoxynojirimycin. Its function is as follows. Catalytic subunit of glucosidase 2, which cleaves sequentially the 2 innermost alpha-1,3-linked glucose residues from the Glc(2)Man(9)GlcNAc(2) oligosaccharide precursor of immature glycoproteins. This chain is Glucosidase 2 subunit alpha (ROT2), found in Saccharomyces cerevisiae (strain ATCC 204508 / S288c) (Baker's yeast).